The following is a 246-amino-acid chain: Ribonuclease PH (246 aa).

Phosphate is bound by residues R91 and 129–131 (GTR).

The protein belongs to the RNase PH family. As to quaternary structure, homohexameric ring arranged as a trimer of dimers.

The enzyme catalyses tRNA(n+1) + phosphate = tRNA(n) + a ribonucleoside 5'-diphosphate. Phosphorolytic 3'-5' exoribonuclease that plays an important role in tRNA 3'-end maturation. Removes nucleotide residues following the 3'-CCA terminus of tRNAs; can also add nucleotides to the ends of RNA molecules by using nucleoside diphosphates as substrates, but this may not be physiologically important. Probably plays a role in initiation of 16S rRNA degradation (leading to ribosome degradation) during starvation. This chain is Ribonuclease PH, found in Burkholderia cenocepacia (strain ATCC BAA-245 / DSM 16553 / LMG 16656 / NCTC 13227 / J2315 / CF5610) (Burkholderia cepacia (strain J2315)).